We begin with the raw amino-acid sequence, 173 residues long: Photosystem I assembly protein Ycf3 (173 aa).

TPR repeat units follow at residues 35-68 (AFAY…EEDP), 72-105 (SYTF…NPKM), and 120-153 (GEQA…APDN).

This sequence belongs to the Ycf3 family.

The protein localises to the plastid. The protein resides in the cyanelle thylakoid membrane. In terms of biological role, essential for the assembly of the photosystem I (PSI) complex. May act as a chaperone-like factor to guide the assembly of the PSI subunits. This is Photosystem I assembly protein Ycf3 from Cyanophora paradoxa.